Reading from the N-terminus, the 211-residue chain is MTKTVALLDYGSGNLRSAQRALEHVGAEVIVTSDPDICTNADGLLVPGVGAFDACMKGLRGVFGHRIIGTRLAGGRPVMGICVGMQILFDEGIEHGIQTRGCGEWSGRVERLQARILPHMGWNTVEKQPGSEMFAGLSEDERYYFVHTYGVRDWTLVTDDLTTPPLVTWAVHENDRFVAAVENGALWATQFHPEKSGDAGAQLLRNWINHI.

The region spanning 4-211 (TVALLDYGSG…QLLRNWINHI (208 aa)) is the Glutamine amidotransferase type-1 domain. Cys-82 (nucleophile) is an active-site residue. Catalysis depends on residues His-192 and Glu-194.

In terms of assembly, heterodimer of HisH and HisF.

The protein resides in the cytoplasm. It carries out the reaction 5-[(5-phospho-1-deoxy-D-ribulos-1-ylimino)methylamino]-1-(5-phospho-beta-D-ribosyl)imidazole-4-carboxamide + L-glutamine = D-erythro-1-(imidazol-4-yl)glycerol 3-phosphate + 5-amino-1-(5-phospho-beta-D-ribosyl)imidazole-4-carboxamide + L-glutamate + H(+). It catalyses the reaction L-glutamine + H2O = L-glutamate + NH4(+). It functions in the pathway amino-acid biosynthesis; L-histidine biosynthesis; L-histidine from 5-phospho-alpha-D-ribose 1-diphosphate: step 5/9. IGPS catalyzes the conversion of PRFAR and glutamine to IGP, AICAR and glutamate. The HisH subunit catalyzes the hydrolysis of glutamine to glutamate and ammonia as part of the synthesis of IGP and AICAR. The resulting ammonia molecule is channeled to the active site of HisF. The sequence is that of Imidazole glycerol phosphate synthase subunit HisH from Corynebacterium efficiens (strain DSM 44549 / YS-314 / AJ 12310 / JCM 11189 / NBRC 100395).